The following is a 301-amino-acid chain: Protease HtpX (301 aa).

The next 2 helical transmembrane spans lie at I4–I24 and T44–M64. H150 provides a ligand contact to Zn(2+). The active site involves E151. H154 contributes to the Zn(2+) binding site. The next 2 helical transmembrane spans lie at L165 to V185 and F201 to W221. E227 contacts Zn(2+).

Belongs to the peptidase M48B family. The cofactor is Zn(2+).

The protein localises to the cell inner membrane. The protein is Protease HtpX of Alkalilimnicola ehrlichii (strain ATCC BAA-1101 / DSM 17681 / MLHE-1).